Here is a 358-residue protein sequence, read N- to C-terminus: NADH-quinone oxidoreductase subunit H (358 aa).

Transmembrane regions (helical) follow at residues 20–40 (ITVGLVVSVIVKIVIILIPLI), 95–115 (ALFYIGPIMSLAPSFAAWAVI), 128–148 (IGLLYILMITSLSVYGVIIAG), 168–188 (ISYEIAMSAALVCVVMVSGSM), 206–226 (VFSWNWLPLFPIFIVYLISAV), 253–273 (GFAFALFFLAEYIFMILIAAL), 295–315 (TPSAFWMFVKMAAVLYWYLWI), and 334–354 (VLIPIGFAYIVVLGVWMISPL).

It belongs to the complex I subunit 1 family. In terms of assembly, NDH-1 is composed of 14 different subunits. Subunits NuoA, H, J, K, L, M, N constitute the membrane sector of the complex.

The protein localises to the cell inner membrane. The catalysed reaction is a quinone + NADH + 5 H(+)(in) = a quinol + NAD(+) + 4 H(+)(out). Its function is as follows. NDH-1 shuttles electrons from NADH, via FMN and iron-sulfur (Fe-S) centers, to quinones in the respiratory chain. The immediate electron acceptor for the enzyme in this species is believed to be ubiquinone. Couples the redox reaction to proton translocation (for every two electrons transferred, four hydrogen ions are translocated across the cytoplasmic membrane), and thus conserves the redox energy in a proton gradient. This subunit may bind ubiquinone. The chain is NADH-quinone oxidoreductase subunit H from Neisseria gonorrhoeae (strain ATCC 700825 / FA 1090).